Here is a 326-residue protein sequence, read N- to C-terminus: ELAV-like protein 1-B (326 aa).

3 RRM domains span residues 20–98 (TNLI…FARP), 106–186 (ANLY…FAAN), and 244–322 (WCIF…FKTS).

This sequence belongs to the RRM elav family. In terms of assembly, interacts (via RRM3) with cirbp. Unable to form oligomers. Part of a ribonucleoprotein (RNP) complex, at least composed of elavl1/elrA and/or elavl2/elrB, igf2bp3/vg1RBP, ddx6/Xp54, ybx2/frgy2, lsm14b/rap55b and, in a subset of RNP complexes, stau1/staufen.

The protein localises to the cytoplasm. Its subcellular location is the cell cortex. In terms of biological role, RNA-binding protein that binds to the 3'-UTR region of mRNAs and increases their stability. Involved in embryonic stem cells (ESCs) differentiation: preferentially binds mRNAs that are not methylated by N6-methyladenosine (m6A), stabilizing them, promoting ESCs differentiation. Binds to poly-U elements and AU-rich elements (AREs) in the 3'-UTR of target mRNAs. Acts cooperatively with cribp to stabilize AU-rich sequence (ARE)-containing mRNAs. May play a role during gastrulation. Required for the vegetal localization of vg1 mRNA. This Xenopus laevis (African clawed frog) protein is ELAV-like protein 1-B (elavl1-b).